A 111-amino-acid chain; its full sequence is UPF0060 membrane protein Ajs_1473 (111 aa).

Helical transmembrane passes span 8–28 (ILFAVTAVAEIVGCYLPWLVV), 33–53 (SAWLLLPAAVSLSLFAWLLTL), 65–85 (YGGMYIAVALVWLHVVDGVAL), and 88–108 (WDFVGAAIALAGMSVIALQPA).

The protein belongs to the UPF0060 family.

The protein localises to the cell inner membrane. This chain is UPF0060 membrane protein Ajs_1473, found in Acidovorax sp. (strain JS42).